The sequence spans 385 residues: ATP phosphoribosyltransferase regulatory subunit (385 aa).

It belongs to the class-II aminoacyl-tRNA synthetase family. HisZ subfamily. Heteromultimer composed of HisG and HisZ subunits.

Its subcellular location is the cytoplasm. It participates in amino-acid biosynthesis; L-histidine biosynthesis; L-histidine from 5-phospho-alpha-D-ribose 1-diphosphate: step 1/9. Required for the first step of histidine biosynthesis. May allow the feedback regulation of ATP phosphoribosyltransferase activity by histidine. In Bordetella petrii (strain ATCC BAA-461 / DSM 12804 / CCUG 43448), this protein is ATP phosphoribosyltransferase regulatory subunit.